The primary structure comprises 170 residues: Probable calcium-binding protein CML29 (170 aa).

EF-hand domains are found at residues 27–62, 63–98, and 138–170; these read SYIS…LGLD, KPEH…GQLG, and ASVE…AQLL. The Ca(2+) site is built by Asp40, Asp42, Asp44, Glu51, Asp76, Asp78, Asp80, Lys82, Glu87, Asp151, Asp153, Asp155, and Glu162.

Potential calcium sensor. This is Probable calcium-binding protein CML29 (CML29) from Oryza sativa subsp. japonica (Rice).